Here is a 199-residue protein sequence, read N- to C-terminus: Recombination protein RecR (199 aa).

The segment at 58-73 adopts a C4-type zinc-finger fold; it reads CQRCFHLSSEDLCNIC. The 95-residue stretch at 81-175 folds into the Toprim domain; the sequence is QTICVVADPR…RVTRIAFGLP (95 aa).

This sequence belongs to the RecR family.

Functionally, may play a role in DNA repair. It seems to be involved in an RecBC-independent recombinational process of DNA repair. It may act with RecF and RecO. The polypeptide is Recombination protein RecR (Synechococcus elongatus (strain ATCC 33912 / PCC 7942 / FACHB-805) (Anacystis nidulans R2)).